The primary structure comprises 543 residues: MGTSLSPNDPWPLNPLSIQQTTLLLLLSVLATVHVGQRLLRQRRRQLRSAPPGPFAWPLIGNAAAVGQAAHLSFARLARRYGDVFQIRLGSCPIVVLNGERAIHQALVQQGSAFADRPAFASFRVVSGGRSMAFGHYSEHWKVQRRAAHSMMRNFFTRQPRSRQVLEGHVLSEARELVALLVRGSADGAFLDPRPLTVVAVANVMSAVCFGCRYSHDDPEFRELLSHNEEFGRTVGAGSLVDVMPWLQYFPNPVRTVFREFEQLNRNFSNFILDKFLRHCESLRPGAAPRDMMDAFILSAEKKAAGDSHGGGARLDLENVPATITDIFGASQDTLSTALQWLLLLFTRYPDVQTRVQAELDQVVGRDRLPCMGDQPNLPYVLAFLYEAMRFSSFVPVTIPHATTANTSVLGYHIPKDTVVFVNQWSVNHDPLKWPNPENFDPARFLDKDGLINKDLTSRVMIFSVGKRRCIGEELSKMQLFLFISILAHQCDFRANPNEPAKMNFSYGLTIKPKSFKVNVTLRESMELLDSAVQNLQAKETCQ.

Cys470 contributes to the heme binding site.

Belongs to the cytochrome P450 family. Heme is required as a cofactor. Expressed in heart, brain, lung, skeletal muscle, kidney, spleen, thymus, prostate, testis, ovary, small intestine, colon, and peripheral blood leukocytes. Expressed in retinal endothelial cells and umbilical vein endothelial cells (at protein level).

It is found in the endoplasmic reticulum membrane. It localises to the microsome membrane. Its subcellular location is the mitochondrion. It carries out the reaction an organic molecule + reduced [NADPH--hemoprotein reductase] + O2 = an alcohol + oxidized [NADPH--hemoprotein reductase] + H2O + H(+). The enzyme catalyses 17beta-estradiol + reduced [NADPH--hemoprotein reductase] + O2 = 2-hydroxy-17beta-estradiol + oxidized [NADPH--hemoprotein reductase] + H2O + H(+). The catalysed reaction is 17beta-estradiol + reduced [NADPH--hemoprotein reductase] + O2 = 4-hydroxy-17beta-estradiol + oxidized [NADPH--hemoprotein reductase] + H2O + H(+). It catalyses the reaction estrone + reduced [NADPH--hemoprotein reductase] + O2 = 2-hydroxyestrone + oxidized [NADPH--hemoprotein reductase] + H2O + H(+). It carries out the reaction estrone + reduced [NADPH--hemoprotein reductase] + O2 = 4-hydroxyestrone + oxidized [NADPH--hemoprotein reductase] + H2O + H(+). The enzyme catalyses testosterone + reduced [NADPH--hemoprotein reductase] + O2 = 6beta,17beta-dihydroxyandrost-4-en-3-one + oxidized [NADPH--hemoprotein reductase] + H2O + H(+). The catalysed reaction is progesterone + reduced [NADPH--hemoprotein reductase] + O2 = 6beta-hydroxyprogesterone + oxidized [NADPH--hemoprotein reductase] + H2O + H(+). It catalyses the reaction progesterone + reduced [NADPH--hemoprotein reductase] + O2 = 16alpha-hydroxyprogesterone + oxidized [NADPH--hemoprotein reductase] + H2O + H(+). It carries out the reaction all-trans-retinol + reduced [NADPH--hemoprotein reductase] + O2 = all-trans-retinal + oxidized [NADPH--hemoprotein reductase] + 2 H2O + H(+). The enzyme catalyses all-trans-retinal + reduced [NADPH--hemoprotein reductase] + O2 = all-trans-retinoate + oxidized [NADPH--hemoprotein reductase] + H2O + 2 H(+). The catalysed reaction is (5Z,8Z,11Z,14Z)-eicosatetraenoate + reduced [NADPH--hemoprotein reductase] + O2 = (8R,9S)-epoxy-(5Z,11Z,14Z)-eicosatrienoate + oxidized [NADPH--hemoprotein reductase] + H2O + H(+). It catalyses the reaction (5Z,8Z,11Z,14Z)-eicosatetraenoate + reduced [NADPH--hemoprotein reductase] + O2 = (11R,12S)-epoxy-(5Z,8Z,14Z)-eicosatrienoate + oxidized [NADPH--hemoprotein reductase] + H2O + H(+). It carries out the reaction (5Z,8Z,11Z,14Z)-eicosatetraenoate + reduced [NADPH--hemoprotein reductase] + O2 = (11S,12R)-epoxy-(5Z,8Z,14Z)-eicosatrienoate + oxidized [NADPH--hemoprotein reductase] + H2O + H(+). The enzyme catalyses (5Z,8Z,11Z,14Z)-eicosatetraenoate + reduced [NADPH--hemoprotein reductase] + O2 = (14R,15S)-epoxy-(5Z,8Z,11Z)-eicosatrienoate + oxidized [NADPH--hemoprotein reductase] + H2O + H(+). The catalysed reaction is (5S)-hydroperoxy-(6E,8Z,11Z,14Z)-eicosatetraenoate = 5-oxo-(6E,8Z,11Z,14Z)-eicosatetraenoate + H2O. It catalyses the reaction (12S)-hydroperoxy-(5Z,8Z,10E,14Z)-eicosatetraenoate = 12-oxo-(5Z,8Z,10E,14Z)-eicosatetraenoate + H2O. It carries out the reaction (13S)-hydroperoxy-(9Z,11E)-octadecadienoate = 13-oxo-(9Z,11E)-octadecadienoate + H2O. The enzyme catalyses (15S)-hydroperoxy-(5Z,8Z,11Z,13E)-eicosatetraenoate = 15-oxo-(5Z,8Z,11Z,13E)-eicosatetraenoate + H2O. It participates in steroid hormone biosynthesis. Its pathway is cofactor metabolism; retinol metabolism. The protein operates within lipid metabolism; arachidonate metabolism. Enzyme activity is increased by liposomes containing anionic phospholipids, phosphatidic acid and cardiolipin. Inhibited by naringenin with an IC(50) of 5 uM. Enzyme activity is increased by cytochrome b5. In terms of biological role, a cytochrome P450 monooxygenase involved in the metabolism of various endogenous substrates, including fatty acids, steroid hormones and vitamins. Mechanistically, uses molecular oxygen inserting one oxygen atom into a substrate, and reducing the second into a water molecule, with two electrons provided by NADPH via cytochrome P450 reductase (NADPH--hemoprotein reductase). Exhibits catalytic activity for the formation of hydroxyestrogens from estrone (E1) and 17beta-estradiol (E2), namely 2- and 4-hydroxy E1 and E2. Displays a predominant hydroxylase activity toward E2 at the C-4 position. Metabolizes testosterone and progesterone to B or D ring hydroxylated metabolites. May act as a major enzyme for all-trans retinoic acid biosynthesis in extrahepatic tissues. Catalyzes two successive oxidative transformation of all-trans retinol to all-trans retinal and then to the active form all-trans retinoic acid. Catalyzes the epoxidation of double bonds of certain PUFA. Converts arachidonic acid toward epoxyeicosatrienoic acid (EpETrE) regioisomers, 8,9-, 11,12-, and 14,15- EpETrE, that function as lipid mediators in the vascular system. Additionally, displays dehydratase activity toward oxygenated eicosanoids hydroperoxyeicosatetraenoates (HpETEs). This activity is independent of cytochrome P450 reductase, NADPH, and O2. Also involved in the oxidative metabolism of xenobiotics, particularly converting polycyclic aromatic hydrocarbons and heterocyclic aryl amines procarcinogens to DNA-damaging products. Plays an important role in retinal vascular development. Under hyperoxic O2 conditions, promotes retinal angiogenesis and capillary morphogenesis, likely by metabolizing the oxygenated products generated during the oxidative stress. Also, contributes to oxidative homeostasis and ultrastructural organization and function of trabecular meshwork tissue through modulation of POSTN expression. This Homo sapiens (Human) protein is Cytochrome P450 1B1.